Reading from the N-terminus, the 413-residue chain is Cell surface GPI-anchored protein ECM33 (413 aa).

An N-terminal signal peptide occupies residues 1-20 (MQIKSFLLPIVAALLTSVSA). N-linked (GlcNAc...) asparagine glycans are attached at residues Asn-93, Asn-102, Asn-172, Asn-209, Asn-222, Asn-227, Asn-279, Asn-290, Asn-306, Asn-322, and Asn-382. A disordered region spans residues 347–390 (YVCTHPANPSSSSKSGSSTQTGKSDSKSSDGSSSSNSSSSSKKG). A compositionally biased stretch (low complexity) spans 356–390 (SSSSKSGSSTQTGKSDSKSSDGSSSSNSSSSSKKG). A lipid anchor (GPI-anchor amidated glycine) is attached at Gly-390. Residues 391-413 (ASNVLVVPGMVLTTALGVLLALI) constitute a propeptide, removed in mature form.

Belongs to the SPS2 family.

Its subcellular location is the cell membrane. It localises to the secreted. The protein resides in the cell wall. Cell surface protein required for proper cell wall integrity and for the correct assembly of the mannoprotein outer layer of the cell wall. The polypeptide is Cell surface GPI-anchored protein ECM33 (ECM331) (Candida albicans (strain SC5314 / ATCC MYA-2876) (Yeast)).